Consider the following 81-residue polypeptide: uncharacterized protein (81 aa).

This is an uncharacterized protein from Vaccinia virus (strain Copenhagen) (VACV).